Reading from the N-terminus, the 272-residue chain is Dihydropteroate synthase (272 aa).

Positions 1–251 (MIKTKIMGIL…GVRVHNVLLN (251 aa)) constitute a Pterin-binding domain. Asn-11 lines the Mg(2+) pocket. (7,8-dihydropterin-6-yl)methyl diphosphate is bound by residues Thr-51, Asp-89, Asn-108, Asp-172, Lys-208, and 244-246 (RVH).

It belongs to the DHPS family. Homodimer. Mg(2+) is required as a cofactor.

The catalysed reaction is (7,8-dihydropterin-6-yl)methyl diphosphate + 4-aminobenzoate = 7,8-dihydropteroate + diphosphate. Its pathway is cofactor biosynthesis; tetrahydrofolate biosynthesis; 7,8-dihydrofolate from 2-amino-4-hydroxy-6-hydroxymethyl-7,8-dihydropteridine diphosphate and 4-aminobenzoate: step 1/2. In terms of biological role, catalyzes the condensation of para-aminobenzoate (pABA) with 6-hydroxymethyl-7,8-dihydropterin diphosphate (DHPt-PP) to form 7,8-dihydropteroate (H2Pte), the immediate precursor of folate derivatives. The protein is Dihydropteroate synthase (folP) of Staphylococcus epidermidis (strain ATCC 35984 / DSM 28319 / BCRC 17069 / CCUG 31568 / BM 3577 / RP62A).